Consider the following 231-residue polypeptide: Lipoprotein-releasing system ATP-binding protein LolD (231 aa).

The 226-residue stretch at 6–231 (LQVQAVSKSY…YLQAVAEHAQ (226 aa)) folds into the ABC transporter domain. 42-49 (GTSGSGKS) provides a ligand contact to ATP.

Belongs to the ABC transporter superfamily. Lipoprotein translocase (TC 3.A.1.125) family. As to quaternary structure, the complex is composed of two ATP-binding proteins (LolD) and two transmembrane proteins (LolC and LolE).

It is found in the cell inner membrane. In terms of biological role, part of the ABC transporter complex LolCDE involved in the translocation of mature outer membrane-directed lipoproteins, from the inner membrane to the periplasmic chaperone, LolA. Responsible for the formation of the LolA-lipoprotein complex in an ATP-dependent manner. In Shewanella sp. (strain MR-4), this protein is Lipoprotein-releasing system ATP-binding protein LolD.